Here is a 390-residue protein sequence, read N- to C-terminus: Chorismate synthase (390 aa).

NADP(+) contacts are provided by arginine 48 and arginine 54. FMN is bound by residues 132-134 (RSS), 244-245 (NA), glycine 289, 304-308 (KPTSS), and arginine 330. A disordered region spans residues 362-390 (VGAHPAGAHPAGADPAGTHPGGPGGFQPG). The segment covering 363-379 (GAHPAGAHPAGADPAGT) has biased composition (low complexity). Residues 380-390 (HPGGPGGFQPG) show a composition bias toward gly residues.

The protein belongs to the chorismate synthase family. As to quaternary structure, homotetramer. The cofactor is FMNH2.

The enzyme catalyses 5-O-(1-carboxyvinyl)-3-phosphoshikimate = chorismate + phosphate. The protein operates within metabolic intermediate biosynthesis; chorismate biosynthesis; chorismate from D-erythrose 4-phosphate and phosphoenolpyruvate: step 7/7. In terms of biological role, catalyzes the anti-1,4-elimination of the C-3 phosphate and the C-6 proR hydrogen from 5-enolpyruvylshikimate-3-phosphate (EPSP) to yield chorismate, which is the branch point compound that serves as the starting substrate for the three terminal pathways of aromatic amino acid biosynthesis. This reaction introduces a second double bond into the aromatic ring system. The polypeptide is Chorismate synthase (Methylobacterium sp. (strain 4-46)).